We begin with the raw amino-acid sequence, 367 residues long: Queuine tRNA-ribosyltransferase (367 aa).

Asp-92 serves as the catalytic Proton acceptor. Substrate contacts are provided by residues 92-96 (DSGGF), Asp-146, Gln-188, and Gly-215. Positions 246-252 (GVGTPKD) are RNA binding. The Nucleophile role is filled by Asp-265. Residues Cys-303, Cys-305, Cys-308, and His-334 each contribute to the Zn(2+) site.

The protein belongs to the queuine tRNA-ribosyltransferase family. In terms of assembly, homodimer. Within each dimer, one monomer is responsible for RNA recognition and catalysis, while the other monomer binds to the replacement base PreQ1. Zn(2+) serves as cofactor.

The enzyme catalyses 7-aminomethyl-7-carbaguanine + guanosine(34) in tRNA = 7-aminomethyl-7-carbaguanosine(34) in tRNA + guanine. The protein operates within tRNA modification; tRNA-queuosine biosynthesis. Catalyzes the base-exchange of a guanine (G) residue with the queuine precursor 7-aminomethyl-7-deazaguanine (PreQ1) at position 34 (anticodon wobble position) in tRNAs with GU(N) anticodons (tRNA-Asp, -Asn, -His and -Tyr). Catalysis occurs through a double-displacement mechanism. The nucleophile active site attacks the C1' of nucleotide 34 to detach the guanine base from the RNA, forming a covalent enzyme-RNA intermediate. The proton acceptor active site deprotonates the incoming PreQ1, allowing a nucleophilic attack on the C1' of the ribose to form the product. After dissociation, two additional enzymatic reactions on the tRNA convert PreQ1 to queuine (Q), resulting in the hypermodified nucleoside queuosine (7-(((4,5-cis-dihydroxy-2-cyclopenten-1-yl)amino)methyl)-7-deazaguanosine). This chain is Queuine tRNA-ribosyltransferase, found in Francisella tularensis subsp. novicida (strain U112).